The primary structure comprises 176 residues: MNPSHPAVHPVEAPPTDVHHAPRVRMKDYQGMPGTLGGLALRLGQFCFAVVAFSIMLSTDDFSTVTAFCYLVAATVLQCLWSLALAVIDGYALLVKRSLRNSLVVSLFVVGDGVTATLTFAAACASAGITVLIGNDLRECDQNHCGKYETATAMAFLSWFMVSPSFLLTFWLLASR.

Residues methionine 1–threonine 35 lie on the Cytoplasmic side of the membrane. Residues leucine 36–methionine 56 traverse the membrane as a helical segment. At leucine 57–alanine 67 the chain is on the extracellular side. The chain crosses the membrane as a helical span at residues phenylalanine 68–isoleucine 88. Over aspartate 89–serine 102 the chain is Cytoplasmic. The chain crosses the membrane as a helical span at residues leucine 103 to alanine 123. The Extracellular segment spans residues cysteine 124 to threonine 152. A helical membrane pass occupies residues alanine 153–leucine 173. Residues alanine 174–arginine 176 lie on the Cytoplasmic side of the membrane.

It belongs to the Casparian strip membrane proteins (CASP) family. Homodimer and heterodimers.

The protein localises to the cell membrane. The sequence is that of CASP-like protein 5A1 from Ginkgo biloba (Ginkgo).